A 125-amino-acid polypeptide reads, in one-letter code: Fluoride-specific ion channel FluC (125 aa).

The next 4 membrane-spanning stretches (helical) occupy residues 9-29 (LFCAGGGLTRYYLSGWIYGLL), 32-52 (AFPYGTLVVNIIGAYCIGLIM), 67-87 (IGLTVGFMGGLTTFSTFSYET), and 99-119 (AFTNVLASVAVCLLCTWLGII). Na(+) is bound by residues G75 and T78.

The protein belongs to the fluoride channel Fluc/FEX (TC 1.A.43) family.

Its subcellular location is the cell inner membrane. It catalyses the reaction fluoride(in) = fluoride(out). With respect to regulation, na(+) is not transported, but it plays an essential structural role and its presence is essential for fluoride channel function. Fluoride-specific ion channel. Important for reducing fluoride concentration in the cell, thus reducing its toxicity. This Trichlorobacter lovleyi (strain ATCC BAA-1151 / DSM 17278 / SZ) (Geobacter lovleyi) protein is Fluoride-specific ion channel FluC.